The primary structure comprises 351 residues: Cyanuric acid amidohydrolase (351 aa).

The RU A stretch occupies residues 1-96; it reads MPSLRAHVFR…HWTVFARETV (96 aa). Residues Arg-53 and 77–78 each bind substrate; that span reads SG. The tract at residues 103-240 is RU B; that stretch reads ALAIGVSRTP…HEIIVLGMSA (138 aa). The active site involves Lys-153. Substrate-binding positions include Arg-185 and 223 to 224; that span reads SS. The active-site Nucleophile is Ser-223. The interval 246-351 is RU C; that stretch reads LSIDHAVMLD…PVAIIVEKEQ (106 aa). Glu-283 lines the Mg(2+) pocket. Residues Arg-310 and 329-330 each bind substrate; that span reads SG. Mg(2+)-binding residues include Ala-332, Gln-335, Gly-336, Pro-337, and Gly-340.

Belongs to the cyclic amide hydrolase (CyAH) family. Homotetramer.

It carries out the reaction cyanurate + H2O = 1-carboxybiuret + H(+). It functions in the pathway xenobiotic degradation; atrazine degradation; biuret from cyanurate: step 1/1. Inhibited by barbituric acid. Its function is as follows. Responsible for the hydrolysis of cyanuric acid, an intermediate formed during catabolism of s-triazine based compounds in herbicides such as atrazine and polymers such as melamine. Catalyzes the hydrolytic opening of the s-triazine ring of cyanuric acid (2,4,6-trihydroxy-s-triazine) to yield carbon dioxide and carboxybiuret, which spontaneously decarboxylates to biuret. This chain is Cyanuric acid amidohydrolase, found in Rhizobium leguminosarum bv. trifolii (strain WSM1325).